Here is a 140-residue protein sequence, read N- to C-terminus: Small ribosomal subunit protein uS12m (140 aa).

The protein belongs to the universal ribosomal protein uS12 family.

The protein localises to the mitochondrion. The protein is Small ribosomal subunit protein uS12m (mrps12) of Dictyostelium citrinum (Slime mold).